A 414-amino-acid chain; its full sequence is Glutamyl-tRNA reductase (414 aa).

Residues 49 to 52 (TCNR), Ser108, 113 to 115 (EPQ), and Gln119 contribute to the substrate site. Cys50 acts as the Nucleophile in catalysis. Residue 188–193 (GAGQTG) coordinates NADP(+).

Belongs to the glutamyl-tRNA reductase family. Homodimer.

The catalysed reaction is (S)-4-amino-5-oxopentanoate + tRNA(Glu) + NADP(+) = L-glutamyl-tRNA(Glu) + NADPH + H(+). The protein operates within porphyrin-containing compound metabolism; protoporphyrin-IX biosynthesis; 5-aminolevulinate from L-glutamyl-tRNA(Glu): step 1/2. In terms of biological role, catalyzes the NADPH-dependent reduction of glutamyl-tRNA(Glu) to glutamate 1-semialdehyde (GSA). This Francisella tularensis subsp. tularensis (strain WY96-3418) protein is Glutamyl-tRNA reductase.